A 199-amino-acid chain; its full sequence is Glycerol-3-phosphate acyltransferase (199 aa).

The next 5 helical transmembrane spans lie at 3–23 (AAVW…GVLV), 50–70 (WGPA…AVLV), 78–98 (DWML…SVFL), 113–133 (LLFL…SVIL), and 154–174 (LALG…LLIF).

Belongs to the PlsY family. In terms of assembly, probably interacts with PlsX.

It is found in the cell inner membrane. The enzyme catalyses an acyl phosphate + sn-glycerol 3-phosphate = a 1-acyl-sn-glycero-3-phosphate + phosphate. It participates in lipid metabolism; phospholipid metabolism. Catalyzes the transfer of an acyl group from acyl-phosphate (acyl-PO(4)) to glycerol-3-phosphate (G3P) to form lysophosphatidic acid (LPA). This enzyme utilizes acyl-phosphate as fatty acyl donor, but not acyl-CoA or acyl-ACP. The protein is Glycerol-3-phosphate acyltransferase of Thermus thermophilus (strain ATCC BAA-163 / DSM 7039 / HB27).